Consider the following 237-residue polypeptide: Proteasome subunit alpha type-5-B (237 aa).

Met1 is subject to N-acetylmethionine. Residues Lys43, Lys66, and Lys185 each participate in a glycyl lysine isopeptide (Lys-Gly) (interchain with G-Cter in ubiquitin) cross-link.

The protein belongs to the peptidase T1A family. As to quaternary structure, component of the 20S core complex of the 26S proteasome. The 26S proteasome is composed of a core protease (CP), known as the 20S proteasome, capped at one or both ends by the 19S regulatory particle (RP/PA700). The 20S proteasome core is composed of 28 subunits that are arranged in four stacked rings, resulting in a barrel-shaped structure. The two end rings are each formed by seven alpha subunits, and the two central rings are each formed by seven beta subunits. The catalytic chamber with the active sites is on the inside of the barrel.

It localises to the cytoplasm. It is found in the nucleus. Its function is as follows. The proteasome is a multicatalytic proteinase complex which is characterized by its ability to cleave peptides with Arg, Phe, Tyr, Leu, and Glu adjacent to the leaving group at neutral or slightly basic pH. The proteasome has an ATP-dependent proteolytic activity. This is Proteasome subunit alpha type-5-B (PAE2) from Arabidopsis thaliana (Mouse-ear cress).